The primary structure comprises 662 residues: DCC-interacting protein 13-beta (662 aa).

Residues 1 to 428 (MPAVDKLLLE…NSDIEDDNIV (428 aa)) form a required for RAB5A binding region. Positions 3–268 (AVDKLLLEEA…ESVYTPDIDV (266 aa)) constitute a BAR domain. The PH domain maps to 277–375 (LIQKTGYLNL…WICAVNNISR (99 aa)). The PID domain maps to 486 to 635 (SLLQQMFIVR…LMLSVPLTND (150 aa)). The interval 642 to 662 (NDQADDTGGSPSENRGAESEA) is disordered.

As to quaternary structure, homodimer. Homotetramer. Binds RAB5A/Rab5 through an N-terminal domain. This interaction is essential for its recruitment to endosomal membranes as well as its role in cell proliferation. Binds subunits of the NuRD/MeCP1 complex. Interacts with FSHR; interaction is independent of follicle stimulating hormone stimulation. Interacts with APPL1; the interaction is decreased by adiponectin in a time-dependent manner. Forms a complex comprising APPL1, RUVBL2, CTNNB1, HDAC1 and HDAC2; interaction reduces interaction between CTNNB1, HDAC1, HDAC2 and RUVBL2 leading to the decrease of deacetylase activity of this complex; affects the recruitment of repressive complexes to the Wnt target genes. Interacts (via BAR domain) with TBC1D1; interaction is dependent of TBC1D1 phosphorylation at 'Ser-235'; interaction diminishes the phosphorylation of TBC1D1 at 'Thr-596', resulting in inhibition of SLC2A4 translocation and glucose uptake. Interacts with ANXA2; targets APPL2 to endosomes and acting in parallel to RAB5A. Interacts with RAB31 (in GTP-bound form); interaction contributes to or enhances recruitment of APPL2 to the phagosomes; interaction enhances Fc-gamma receptor-mediated phagocytosis through PI3K/Akt signaling in macrophages. Interacts with PIK3R1; forms a complex with PIK3R1 and APPL1. Interacts (via BAR domain) with ADIPOR1; hinders the accessibility of APPL1 to ADIPOR1; negatively regulates adiponectin signaling; ADIPOQ dissociates this interaction and facilitates the recruitment of APPL1 to ADIPOR1. Interacts (via BAR domain) with ADIPOR2; ADIPOQ dissociates this interaction. As to expression, expressed in insulin-target tissues including skeletal muscle, liver, fat, and brain. Highly expressed in kidney and pancreas. Abundantly expressed in the ventromedial hypothalamus (VMH), barely detectable in the arcuate nucleus (ARC) and paraventricular nucleus (PVN) of the hypothalamus. Also expressed in pancreatic beta-cells.

The protein resides in the early endosome membrane. It is found in the nucleus. It localises to the cell membrane. The protein localises to the endosome membrane. Its subcellular location is the cytoplasm. The protein resides in the cytoplasmic vesicle. It is found in the phagosome. It localises to the cell projection. The protein localises to the ruffle. Its subcellular location is the ruffle membrane. The protein resides in the phagosome membrane. Its function is as follows. Multifunctional adapter protein that binds to various membrane receptors, nuclear factors and signaling proteins to regulate many processes, such as cell proliferation, immune response, endosomal trafficking and cell metabolism. Regulates signaling pathway leading to cell proliferation through interaction with RAB5A and subunits of the NuRD/MeCP1 complex. Plays a role in immune response by modulating phagocytosis, inflammatory and innate immune responses. In macrophages, enhances Fc-gamma receptor-mediated phagocytosis through interaction with RAB31 leading to activation of PI3K/Akt signaling. In response to LPS, modulates inflammatory responses by playing a key role on the regulation of TLR4 signaling and in the nuclear translocation of RELA/NF-kappa-B p65 and the secretion of pro- and anti-inflammatory cytokines. Also functions as a negative regulator of innate immune response via inhibition of AKT1 signaling pathway by forming a complex with APPL1 and PIK3R1. Plays a role in endosomal trafficking of TGFBR1 from the endosomes to the nucleus. Plays a role in cell metabolism by regulating adiponectin and insulin signaling pathways and adaptative thermogenesis. In muscle, negatively regulates adiponectin-simulated glucose uptake and fatty acid oxidation by inhibiting adiponectin signaling pathway through APPL1 sequestration thereby antagonizing APPL1 action. In muscles, negatively regulates insulin-induced plasma membrane recruitment of GLUT4 and glucose uptake through interaction with TBC1D1. Plays a role in cold and diet-induced adaptive thermogenesis by activating ventromedial hypothalamus (VMH) neurons throught AMPK inhibition which enhances sympathetic outflow to subcutaneous white adipose tissue (sWAT), sWAT beiging and cold tolerance. Also plays a role in other signaling pathways namely Wnt/beta-catenin, HGF and glucocorticoid receptor signaling. Positive regulator of beta-catenin/TCF-dependent transcription through direct interaction with RUVBL2/reptin resulting in the relief of RUVBL2-mediated repression of beta-catenin/TCF target genes by modulating the interactions within the beta-catenin-reptin-HDAC complex. May affect adult neurogenesis in hippocampus and olfactory system via regulating the sensitivity of glucocorticoid receptor. Required for fibroblast migration through HGF cell signaling. This Mus musculus (Mouse) protein is DCC-interacting protein 13-beta.